The chain runs to 427 residues: Gamma-glutamyl phosphate reductase (427 aa).

Belongs to the gamma-glutamyl phosphate reductase family.

It localises to the cytoplasm. The enzyme catalyses L-glutamate 5-semialdehyde + phosphate + NADP(+) = L-glutamyl 5-phosphate + NADPH + H(+). Its pathway is amino-acid biosynthesis; L-proline biosynthesis; L-glutamate 5-semialdehyde from L-glutamate: step 2/2. Its function is as follows. Catalyzes the NADPH-dependent reduction of L-glutamate 5-phosphate into L-glutamate 5-semialdehyde and phosphate. The product spontaneously undergoes cyclization to form 1-pyrroline-5-carboxylate. The protein is Gamma-glutamyl phosphate reductase of Sinorhizobium medicae (strain WSM419) (Ensifer medicae).